The chain runs to 84 residues: Small ribosomal subunit protein eS27w (84 aa).

The segment at 39 to 61 adopts a C4-type zinc-finger fold; that stretch reads CQGCFNITTVFSHSQTVVVCGNC.

It belongs to the eukaryotic ribosomal protein eS27 family. Zn(2+) serves as cofactor.

This Arabidopsis thaliana (Mouse-ear cress) protein is Small ribosomal subunit protein eS27w (RPS27D).